The following is a 371-amino-acid chain: MTPDTSMKRVVVKIGSSSLTSLHGEISIRKLEALVDQVVKLKDAGYEVILVSSGAVAAGYRKLGFIQRPEKLPEKQASASIGQGLLMEAYSKLFLAHGYVASQILITRSDFSDEYRYNNVRNTMNVLLERGIIPIINENDTVTVNRLKFGDNDTLAAKVAGLIDADMLVILSDIDGLYDGNPRTNPEAKKIQRVSEITPDIEACAGDTGSIVGTGGMRSKLDAFKIVMASGIKGFLGQADAGDILYHAVHEQAEGTYFEAEGTLPLNQKEQWIAFNSGPEGEMILSDDCSRKITNGQSSLYLDGVQKIKGKFKSGSVVRLMDSKGTEIGLGIVNYSSVQLQEPEKKKELTNRALIDQEAFVCHVDFSLPVN.

Lysine 13 provides a ligand contact to ATP. The substrate site is built by serine 53, aspartate 140, and asparagine 152. Residues 172–173 and 214–220 each bind ATP; these read SD and TGGMRSK. In terms of domain architecture, PUA spans 280–356; that stretch reads EGEMILSDDC…KELTNRALID (77 aa).

The protein belongs to the glutamate 5-kinase family.

It localises to the cytoplasm. The enzyme catalyses L-glutamate + ATP = L-glutamyl 5-phosphate + ADP. It functions in the pathway amino-acid biosynthesis; L-proline biosynthesis; L-glutamate 5-semialdehyde from L-glutamate: step 1/2. Its function is as follows. Catalyzes the transfer of a phosphate group to glutamate to form L-glutamate 5-phosphate. In Bacillus subtilis (strain 168), this protein is Glutamate 5-kinase 2 (proJ).